The primary structure comprises 334 residues: Transcription initiation factor IIB (334 aa).

The TFIIB-type zinc finger occupies 34 to 65 (TETVCPECGGRQLVHDYERAELVCQSCGLVID). Cys-38, Cys-41, Cys-57, and Cys-60 together coordinate Zn(2+). 2 consecutive repeat copies span residues 151-234 (SELD…SREL) and 245-326 (DYVP…ELAE).

This sequence belongs to the TFIIB family.

Its function is as follows. Stabilizes TBP binding to an archaeal box-A promoter. Also responsible for recruiting RNA polymerase II to the pre-initiation complex (DNA-TBP-TFIIB). In Methanoregula boonei (strain DSM 21154 / JCM 14090 / 6A8), this protein is Transcription initiation factor IIB.